Reading from the N-terminus, the 244-residue chain is uncharacterized protein (244 aa).

Transmembrane regions (helical) follow at residues phenylalanine 21 to tyrosine 41, alanine 44 to valine 64, phenylalanine 66 to leucine 86, tryptophan 139 to glycine 159, valine 165 to phenylalanine 185, and leucine 199 to isoleucine 219.

Belongs to the AzlC family.

Its subcellular location is the cell membrane. This is an uncharacterized protein from Haemophilus influenzae (strain ATCC 51907 / DSM 11121 / KW20 / Rd).